The following is a 1004-amino-acid chain: E3 ubiquitin-protein ligase NEDD4-like (1004 aa).

The C2 domain occupies 30–154; sequence LASHHSRGLE…TEDPTMERPY (125 aa). Disordered regions lie at residues 207-230 and 272-407; these read SNDSASQHQEELPPPPLPPGWEEK and AAHR…TPSV. The WW 1 domain maps to 221–254; it reads PPLPPGWEEKVDNLGRTYYVNHNNRSTQWHRPSL. Residue Ser341 is modified to Phosphoserine. Phosphothreonine is present on Thr347. 2 stretches are compositionally biased toward polar residues: residues 347-359 and 366-376; these read TPDSNGEQFSSLI and RLRSCSVTDTV. Ser371 carries the post-translational modification Phosphoserine; by WNK1 and WNK4. Position 396 is a phosphothreonine; by SGK1 (Thr396). The 34-residue stretch at 414–447 folds into the WW 2 domain; that stretch reads PGLPSGWEERKDAKGRTYYVNHNNRTTTWTRPIM. The segment at 453–523 is disordered; it reads GASGSATNSN…YNSPKPQHKV (71 aa). At Ser475 the chain carries Phosphoserine. The residue at position 477 (Ser477) is a Phosphoserine; by SGK1. Phosphoserine is present on residues Ser478, Ser493, Ser504, Ser508, Ser512, and Ser516. A compositionally biased stretch (basic and acidic residues) spans 489–500; sequence GAKDSPIRRAVK. WW domains are found at residues 526 to 559 and 577 to 610; these read SFLPPGWEMRIAPNGRPFFIDHNTKTTTWEDPRL and GPLPPGWEERIHLDGRTFYIDHNSKITQWEDPRL. One can recognise an HECT domain in the interval 669–1003; sequence RPDVLKARLW…VENAQGFEGV (335 aa). Cys971 functions as the Glycyl thioester intermediate in the catalytic mechanism.

As to quaternary structure, interacts with UBE2E3. Interacts with NDFIP1; this interaction activates the E3 ubiquitin-protein ligase. Interacts with NDFIP2; this interaction activates the E3 ubiquitin-protein ligase. Interacts (via WW domains) with SCN1A. Interacts (via WW domains) with SCN2A. Interacts (via WW domains) with SCN3A. Interacts (via WW domains) with SCN5A. Interacts (via WW domains) with SCN8A. Interacts (via WW domains) with SCN9A. Interacts (via WW domains) with SCN10A. Interacts (via WW domains) with CLCN5. Interacts with SMAD2. Interacts with SMAD3. Interacts with SMAD6. Interacts with SMAD7. The phosphorylated form interacts with 14-3-3 proteins. Interacts with TNK2. Interacts with WNK1. Interacts with SGK1. Interacts (via C2 domain) with NPC2. Interacts with ARRDC4. Interacts with KCNQ1; promotes internalization of KCNQ1. Interacts (via domains WW1, 3 and 4) with USP36; the interaction inhibits ubiquitination of, at least, NTRK1, KCNQ2 and KCNQ3 by NEDD4L. Interacts with PRRG4 (via cytoplasmic domain). Interacts with LDLRAD3; the interaction is direct. Interacts with UBE2D2. Interacts with TTYH2 and TTYH3. In terms of processing, phosphorylated; which impairs interaction with SCNN. Interaction with YWHAH inhibits dephosphorylation. Aldosterone induces Ser-477 phosphorylation by SGK1. Post-translationally, auto-ubiquitinated. Deubiquitinated by USP36, no effect on NEDD4L protein levels. Both proteins interact and regulate each other's ubiquitination levels. In terms of tissue distribution, highly expressed in liver and kidney. Also expressed in heart, brain and lung. Isoform 1 is expressed in kidney, lung and gut. Isoform 3 is ubiquitously expressed.

It localises to the cytoplasm. The protein localises to the golgi apparatus. The protein resides in the endosome. It is found in the multivesicular body. It catalyses the reaction S-ubiquitinyl-[E2 ubiquitin-conjugating enzyme]-L-cysteine + [acceptor protein]-L-lysine = [E2 ubiquitin-conjugating enzyme]-L-cysteine + N(6)-ubiquitinyl-[acceptor protein]-L-lysine.. The enzyme catalyses [E2 ubiquitin-conjugating enzyme]-S-ubiquitinyl-L-cysteine + [acceptor protein]-L-cysteine = [E2 ubiquitin-conjugating enzyme]-L-cysteine + [acceptor protein]-S-ubiquitinyl-L-cysteine.. It participates in protein modification; protein ubiquitination. Its activity is regulated as follows. Activated by NDFIP1- and NDFIP2-binding. Functionally, E3 ubiquitin-protein ligase that mediates the polyubiquitination of lysine and cysteine residues on target proteins and is thereby implicated in the regulation of various signaling pathways including autophagy, innate immunity or DNA repair. Inhibits TGF-beta signaling by triggering SMAD2 and TGFBR1 ubiquitination and proteasome-dependent degradation. Downregulates autophagy and cell growth by ubiquitinating and reducing cellular ULK1 or ASCT2 levels. Promotes ubiquitination and internalization of various plasma membrane channels such as ENaC, SCN2A/Nav1.2, SCN3A/Nav1.3, SCN5A/Nav1.5, SCN9A/Nav1.7, SCN10A/Nav1.8, KCNA3/Kv1.3, KCNH2, EAAT1, KCNQ2/Kv7.2, KCNQ3/Kv7.3 or CLC5. Promotes ubiquitination and degradation of SGK1 and TNK2. Ubiquitinates BRAT1 and this ubiquitination is enhanced in the presence of NDFIP1. Plays a role in dendrite formation by melanocytes. Involved in the regulation of TOR signaling. Ubiquitinates and regulates protein levels of NTRK1 once this one is activated by NGF. Plays a role in antiviral innate immunity by catalyzing 'Lys-29'-linked cysteine ubiquitination of TRAF3, resulting in enhanced 'Lys-48' and 'Lys-63'-linked ubiquitination of TRAF3. Ubiquitinates TTYH2 and TYYH3 and regulates protein levels of TTYH2. In Mus musculus (Mouse), this protein is E3 ubiquitin-protein ligase NEDD4-like (Nedd4l).